We begin with the raw amino-acid sequence, 191 residues long: Small ribosomal subunit protein bS6 (191 aa).

The segment at 168–191 (KVNLTRKPTPNKSSENKQKVEKQA) is disordered. The span at 181 to 191 (SENKQKVEKQA) shows a compositional bias: basic and acidic residues.

It belongs to the bacterial ribosomal protein bS6 family.

Its function is as follows. Binds together with bS18 to 16S ribosomal RNA. The polypeptide is Small ribosomal subunit protein bS6 (Mycoplasmoides gallisepticum (strain R(low / passage 15 / clone 2)) (Mycoplasma gallisepticum)).